The primary structure comprises 126 residues: Protein ApaG (126 aa).

The ApaG domain occupies 2 to 126 (SALDTSIRVE…FRLATPGLLH (125 aa)).

The sequence is that of Protein ApaG from Shewanella sp. (strain W3-18-1).